The sequence spans 556 residues: Phosphomethylpyrimidine synthase (556 aa).

Residues N191, M220, Y249, H285, 305–307 (SRG), 346–349 (DALR), and E385 contribute to the substrate site. H389 provides a ligand contact to Zn(2+). Y412 is a substrate binding site. H453 contacts Zn(2+). Residues C535, C538, and C543 each contribute to the [4Fe-4S] cluster site.

Belongs to the ThiC family. [4Fe-4S] cluster serves as cofactor.

The enzyme catalyses 5-amino-1-(5-phospho-beta-D-ribosyl)imidazole + S-adenosyl-L-methionine = 4-amino-2-methyl-5-(phosphooxymethyl)pyrimidine + CO + 5'-deoxyadenosine + formate + L-methionine + 3 H(+). Its pathway is cofactor biosynthesis; thiamine diphosphate biosynthesis. Its function is as follows. Catalyzes the synthesis of the hydroxymethylpyrimidine phosphate (HMP-P) moiety of thiamine from aminoimidazole ribotide (AIR) in a radical S-adenosyl-L-methionine (SAM)-dependent reaction. The sequence is that of Phosphomethylpyrimidine synthase from Chlorobaculum tepidum (strain ATCC 49652 / DSM 12025 / NBRC 103806 / TLS) (Chlorobium tepidum).